The primary structure comprises 111 residues: Small ribosomal subunit protein bS16 (111 aa).

The segment at 92 to 111 (MDVKAKNRKARSSKQEAKEA) is disordered.

This sequence belongs to the bacterial ribosomal protein bS16 family.

In Rickettsia akari (strain Hartford), this protein is Small ribosomal subunit protein bS16.